The sequence spans 710 residues: Dual specificity protein kinase shkE (710 aa).

3 stretches are compositionally biased toward low complexity: residues 83–94, 107–129, and 197–208; these read DVSDSNNNNSTS, NNNNNNNNNNNNNNNNNNNNNNN, and QKQQQSQASIQQ. 2 disordered regions span residues 83-136 and 189-232; these read DVSD…PTVI and QHLT…IPPE. The Protein kinase domain maps to 237 to 495; it reads DVKTDLLGGG…EVTQRMNEVL (259 aa). Residues 243 to 251 and Lys264 contribute to the ATP site; that span reads LGGGAYGKV. The active-site Proton acceptor is Asp359. The SH2 domain occupies 597 to 707; sequence WFHFDISRDI…CPITEIKVPY (111 aa).

It belongs to the protein kinase superfamily. Ser/Thr protein kinase family. SH2 domain-containing protein kinase subfamily.

It localises to the membrane. It catalyses the reaction L-seryl-[protein] + ATP = O-phospho-L-seryl-[protein] + ADP + H(+). The catalysed reaction is L-threonyl-[protein] + ATP = O-phospho-L-threonyl-[protein] + ADP + H(+). Functionally, required for proper chemotaxis and phagocytosis; proper spatiotemporal control of F-actin levels in chemotaxing cells. Negative regulator of the PI3K (phosphatidylinositol 3 kinase) pathway. Predominantly phosphorylates serines and threonines and tyrosines at a lower level. This is Dual specificity protein kinase shkE (shkE) from Dictyostelium discoideum (Social amoeba).